We begin with the raw amino-acid sequence, 94 residues long: Co-chaperonin GroES (94 aa).

This sequence belongs to the GroES chaperonin family. Heptamer of 7 subunits arranged in a ring. Interacts with the chaperonin GroEL.

It is found in the cytoplasm. Its function is as follows. Together with the chaperonin GroEL, plays an essential role in assisting protein folding. The GroEL-GroES system forms a nano-cage that allows encapsulation of the non-native substrate proteins and provides a physical environment optimized to promote and accelerate protein folding. GroES binds to the apical surface of the GroEL ring, thereby capping the opening of the GroEL channel. The sequence is that of Co-chaperonin GroES from Lactiplantibacillus plantarum (strain ATCC BAA-793 / NCIMB 8826 / WCFS1) (Lactobacillus plantarum).